Reading from the N-terminus, the 325-residue chain is Peroxidase 45 (325 aa).

An N-terminal signal peptide occupies residues 1–25 (MEKNTSQTIFSNFFLLLLLSSCVSA). Intrachain disulfides connect Cys36-Cys115, Cys69-Cys74, Cys121-Cys321, and Cys200-Cys232. The active-site Proton acceptor is the His67. Ca(2+) is bound by residues Asp68, Val71, Gly73, Asp75, and Ser77. Pro163 is a binding site for substrate. His193 is a binding site for heme b. Thr194 lines the Ca(2+) pocket. Ca(2+)-binding residues include Asp245, Ser248, and Asp253.

This sequence belongs to the peroxidase family. Classical plant (class III) peroxidase subfamily. Heme b serves as cofactor. It depends on Ca(2+) as a cofactor. Slightly expressed in roots.

The protein localises to the secreted. The enzyme catalyses 2 a phenolic donor + H2O2 = 2 a phenolic radical donor + 2 H2O. In terms of biological role, removal of H(2)O(2), oxidation of toxic reductants, biosynthesis and degradation of lignin, suberization, auxin catabolism, response to environmental stresses such as wounding, pathogen attack and oxidative stress. These functions might be dependent on each isozyme/isoform in each plant tissue. This chain is Peroxidase 45 (PER45), found in Arabidopsis thaliana (Mouse-ear cress).